The chain runs to 233 residues: Large ribosomal subunit protein uL1 (233 aa).

This sequence belongs to the universal ribosomal protein uL1 family. As to quaternary structure, part of the 50S ribosomal subunit.

Its function is as follows. Binds directly to 23S rRNA. The L1 stalk is quite mobile in the ribosome, and is involved in E site tRNA release. Functionally, protein L1 is also a translational repressor protein, it controls the translation of the L11 operon by binding to its mRNA. The protein is Large ribosomal subunit protein uL1 of Nautilia profundicola (strain ATCC BAA-1463 / DSM 18972 / AmH).